We begin with the raw amino-acid sequence, 1589 residues long: Polyhomeotic-proximal chromatin protein (1589 aa).

Residues 1-15 (MDRRALKFMQKRADT) show a composition bias toward basic and acidic residues. Disordered stretches follow at residues 1 to 85 (MDRR…GGKQ), 107 to 174 (KYDV…NCNS), 252 to 290 (LQQQLSEANGGGAASAGAGGAASPANSQQSQQQQHSTAI), 1112 to 1244 (LSTA…STTT), and 1260 to 1294 (AVSTASTTTTSSGTFITSCTSTTTTTTSSISNGSK). 3 stretches are compositionally biased toward low complexity: residues 18-28 (DTTTPVSTTAS), 60-80 (NHNNNNSSQHSHSHQQQQQQQ), and 119-139 (AQQQATSGTGPATGSGSVTPT). Polar residues predominate over residues 154–174 (HTPSTPNRPSAPSTPNTNCNS). The segment covering 260–271 (NGGGAASAGAGG) has biased composition (gly residues). Positions 272-285 (AASPANSQQSQQQQ) are enriched in low complexity. Position 1145 is a phosphoserine (Ser1145). A Phosphothreonine modification is found at Thr1148. The segment covering 1157 to 1180 (TTPKSSTPATVSASVEASSSTGEA) has biased composition (low complexity). The segment covering 1189-1221 (RSSTPSKGATTPTSKQSNAAVQPPSSTTPNSVS) has biased composition (polar residues). 2 stretches are compositionally biased toward low complexity: residues 1230 to 1244 (TCGSLTSATSTSTTT) and 1260 to 1290 (AVSTASTTTTSSGTFITSCTSTTTTTTSSIS). Residues 1356–1389 (SAPGSDMVACEQCGKMEHKAKLKRKRYCSPGCSR) form an FCS-type zinc finger. 4 residues coordinate Zn(2+): Cys1365, Cys1368, Cys1383, and Cys1387. The SAM domain occupies 1513–1577 (WSVDDVSNFI…VAKVESIKEV (65 aa)).

In terms of assembly, component of PRC1 complex, which contains many PcG proteins like Pc, ph, Scm, Psc, Sce and also chromatin-remodeling proteins such as histone deacetylases. This complex is distinct from the Esc/E(z) complex, at least composed of esc, E(z), Su(z)12, HDAC1/Rpd3 and Caf1-55. The 2 complexes however cooperate and interact together during the first 3 hours of development to establish PcG silencing. Interacts with the SAM domain of Scm via its SAM domain in vitro. Interacts with Trl in vivo and with corto in vitro. As to expression, salivary glands.

Its subcellular location is the nucleus. Functionally, polycomb group (PcG) protein. PcG proteins act by forming multiprotein complexes, which are required to maintain the transcriptionally repressive state of homeotic genes throughout development. PcG proteins are not required to initiate repression, but to maintain it during later stages of development. Component of the PcG multiprotein PRC1 complex, a complex that acts via chromatin remodeling and modification of histones; it mediates monoubiquitination of histone H2A 'Lys-118', rendering chromatin heritably changed in its expressibility. Plays a role in regulating the expression of other pair-rule genes such as eve, ftz, and H. The polypeptide is Polyhomeotic-proximal chromatin protein (ph-p) (Drosophila melanogaster (Fruit fly)).